Here is a 254-residue protein sequence, read N- to C-terminus: Receptor expression-enhancing protein 3 (254 aa).

3 consecutive transmembrane segments (helical) span residues methionine 1–tyrosine 21, tyrosine 35–alanine 55, and leucine 59–proline 79. Positions aspartate 162–lysine 232 are disordered. Over residues glutamate 198–glutamate 212 the composition is skewed to acidic residues. Residue threonine 200 is modified to Phosphothreonine. Serine 209 bears the Phosphoserine mark.

This sequence belongs to the DP1 family.

The protein localises to the endoplasmic reticulum membrane. Its function is as follows. Microtubule-binding protein required to ensure proper cell division and nuclear envelope reassembly by sequestering the endoplasmic reticulum away from chromosomes during mitosis. Probably acts by clearing the endoplasmic reticulum membrane from metaphase chromosomes. The protein is Receptor expression-enhancing protein 3 (Reep3) of Mus musculus (Mouse).